Reading from the N-terminus, the 65-residue chain is Large ribosomal subunit protein bL35 (65 aa).

The segment at 1-46 (MPKMKTRQSAAKRYEVTGSGKLRRRRAGKNHLLQHKSAARKRSLST) is disordered. The segment covering 21–44 (KLRRRRAGKNHLLQHKSAARKRSL) has biased composition (basic residues).

This sequence belongs to the bacterial ribosomal protein bL35 family.

This Gloeobacter violaceus (strain ATCC 29082 / PCC 7421) protein is Large ribosomal subunit protein bL35.